A 339-amino-acid chain; its full sequence is Probable long-chain-alcohol O-fatty-acyltransferase 7 (339 aa).

A run of 7 helical transmembrane segments spans residues 7–27 (SLIN…CLPP), 39–59 (IFPV…SIFT), 113–133 (HLST…LYVH), 143–163 (FLLC…LTLL), 226–246 (MLIG…VVFF), 254–274 (TGEV…EVAA), and 287–307 (PVVS…WLFF).

Belongs to the wax synthase family.

Its subcellular location is the membrane. It carries out the reaction a long chain fatty alcohol + a fatty acyl-CoA = a wax ester + CoA. In terms of biological role, catalyzes the final step in the synthesis of long-chain linear esters (waxes). This chain is Probable long-chain-alcohol O-fatty-acyltransferase 7 (AT7), found in Arabidopsis thaliana (Mouse-ear cress).